The sequence spans 2078 residues: Autophagy-related protein 2 homolog B (2078 aa).

The Chorein N-terminal domain occupies 13–108 (ACRYLLQRYL…EMVFRPRPRP (96 aa)). 2 positions are modified to phosphoserine: S255 and S379. The disordered stretch occupies residues 473–495 (GSTFPSNLVHPTPLQKTSLPSRS). The span at 486-495 (LQKTSLPSRS) shows a compositional bias: polar residues. A phosphoserine mark is found at S497, S840, S886, S899, and S1008. A disordered region spans residues 868–888 (EEEENDGHYQEEEEGGAHSLK). Over residues 873–888 (DGHYQEEEEGGAHSLK) the composition is skewed to basic and acidic residues. Position 1012 is a phosphotyrosine (Y1012). Phosphoserine occurs at positions 1016 and 1018. T1022 carries the phosphothreonine modification. The interval 1375-1405 (ADMKPGAFQRRSKVDSSGRSSSRGPVLPEAD) is disordered. S1526 carries the phosphoserine modification.

Belongs to the ATG2 family. In terms of assembly, interacts with WDR45/WIPI4.

It localises to the preautophagosomal structure membrane. The protein resides in the lipid droplet. The protein localises to the endoplasmic reticulum membrane. The enzyme catalyses a 1,2-diacyl-sn-glycero-3-phospho-L-serine(in) = a 1,2-diacyl-sn-glycero-3-phospho-L-serine(out). It carries out the reaction a 1,2-diacyl-sn-glycero-3-phosphoethanolamine(in) = a 1,2-diacyl-sn-glycero-3-phosphoethanolamine(out). Its function is as follows. Lipid transfer protein required for both autophagosome formation and regulation of lipid droplet morphology and dispersion. Tethers the edge of the isolation membrane (IM) to the endoplasmic reticulum (ER) and mediates direct lipid transfer from ER to IM for IM expansion. Binds to the ER exit site (ERES), which is the membrane source for autophagosome formation, and extracts phospholipids from the membrane source and transfers them to ATG9 (ATG9A or ATG9B) to the IM for membrane expansion. Lipid transfer activity is enhanced by WDR45/WIPI4, which promotes ATG2B-association with phosphatidylinositol 3-monophosphate (PI3P)-containing membranes. This is Autophagy-related protein 2 homolog B from Homo sapiens (Human).